The sequence spans 376 residues: MANSANTNTVPKLYRSVIEDVINDVRDIFLDDGVDEQVLMELKTLWENKLMQSRAVDGFHSEEQQLLLQVQQQHQPQQQQHHHHHHHQQAQPQQTVPQQAQTQQVLIPASQQATAPQVIVPDSKLIQHMNASNMSAAATAATLALPAGVTPVQQILTNSGQLLQVVRVANGAQYIFQPQQSVVLQQQVIPQMQPGGVQAPVIQQVLAPLPGGISPQTGVIIQPQQILFTGNKTQVIPTTVAAPTPAQAQITATGHQQPQAQPAQTQAPLVLQVDGTGDTSSEEDEDEEEDYDDDEEEDKEKDGAEDGQVEEEPLNSEDDVSDEEGQELFDTENVVVCQYDKIHRSKNKWKFHLKDGIMNLNGRDYIFSKAIGDAEW.

Position 2 is an N-acetylalanine (A2). Composition is skewed to low complexity over residues 69 to 79 and 89 to 105; these read QVQQQHQPQQQ and QAQP…TQQV. 3 disordered regions span residues 69 to 107, 246 to 265, and 274 to 329; these read QVQQ…QVLI, AQAQ…PAQT, and DGTG…QELF. S280, S281, S316, and S321 each carry phosphoserine; by TAF1. Positions 280 to 329 are enriched in acidic residues; sequence SSEEDEDEEEDYDDDEEEDKEKDGAEDGQVEEEPLNSEDDVSDEEGQELF. DNA contacts are provided by H343 and R344.

It belongs to the TFIIA subunit 1 family. TFIIA is a heterodimer of the large unprocessed subunit 1 and a small subunit gamma. It was originally believed to be a heterotrimer of an alpha (p35), a beta (p19) and a gamma subunit (p12). TFIIA forms a complex with TBP. Part of TBP-based Pol II pre-initiation complex (PIC), in which Pol II core assembles with general transcription factors and other specific initiation factors including GTF2E1, GTF2E2, GTF2F1, GTF2F2, TCEA1, ERCC2, ERCC3, GTF2H2, GTF2H3, GTF2H4, GTF2H5, GTF2A1, GTF2A2, GTF2B and TBP; this large multi-subunit PIC complex mediates DNA unwinding and targets Pol II core to the transcription start site where the first phosphodiester bond forms. The alpha and beta subunits are postranslationally produced from the precursor formby TASP1. The cleavage promotes proteasomal degradation.

It is found in the nucleus. TFIIA is a component of the transcription machinery of RNA polymerase II and plays an important role in transcriptional activation. TFIIA in a complex with TBP mediates transcriptional activity. The sequence is that of Transcription initiation factor IIA subunit 1 (GTF2A1) from Pongo abelii (Sumatran orangutan).